The chain runs to 290 residues: Appressorium protein ROW2 (290 aa).

An N-terminal signal peptide occupies residues 1-19; the sequence is MFTKSVFIALVAGVLGVTA. Positions 266 to 290 are disordered; it reads AIKTPSKRSVMATHVKRSPEWEEEP.

It localises to the secreted. The protein localises to the nucleus. Plays a role in the formation of the appressorium, a specialized infection structure with the purpose of penetrating the host surface, and is required for proper remodeling of the appressorium wall and vesicle secretion. The protein is Appressorium protein ROW2 of Mycosarcoma maydis (Corn smut fungus).